Here is a 215-residue protein sequence, read N- to C-terminus: Peroxiredoxin (215 aa).

A Thioredoxin domain is found at 3-158; the sequence is PLLGDNFPEI…ILRAVKALQV (156 aa). Cysteine 45 serves as the catalytic Cysteine sulfenic acid (-SOH) intermediate. Substrate is bound at residue arginine 121. The cysteines at positions 205 and 211 are disulfide-linked.

This sequence belongs to the peroxiredoxin family. Prx6 subfamily. As to quaternary structure, homodecamer. Pentamer of dimers that assemble into a ring structure.

The protein resides in the cytoplasm. It carries out the reaction a hydroperoxide + [thioredoxin]-dithiol = an alcohol + [thioredoxin]-disulfide + H2O. Functionally, thiol-specific peroxidase that catalyzes the reduction of hydrogen peroxide and organic hydroperoxides to water and alcohols, respectively. Plays a role in cell protection against oxidative stress by detoxifying peroxides. The sequence is that of Peroxiredoxin from Archaeoglobus fulgidus (strain ATCC 49558 / DSM 4304 / JCM 9628 / NBRC 100126 / VC-16).